The chain runs to 861 residues: Leucine--tRNA ligase (861 aa).

Residues 42-52 (PYPSGKLHMGH) carry the 'HIGH' region motif. The 'KMSKS' region motif lies at 620-624 (KMSKS). Lysine 623 is an ATP binding site.

Belongs to the class-I aminoacyl-tRNA synthetase family.

It is found in the cytoplasm. It carries out the reaction tRNA(Leu) + L-leucine + ATP = L-leucyl-tRNA(Leu) + AMP + diphosphate. This is Leucine--tRNA ligase from Hahella chejuensis (strain KCTC 2396).